Consider the following 897-residue polypeptide: Interference hedgehog (897 aa).

A signal peptide spans 1–26 (MSVTRGHKSTPSLLLLFLSVLTSLLA). Topologically, residues 27–702 (AIPVLQANAP…THNETFNMNP (676 aa)) are extracellular. 4 consecutive Ig-like C2-type domains span residues 40–147 (PGVR…ATIS), 148–235 (GDKI…RRLE), 244–336 (PSAA…YIQL), and 342–429 (PRIV…LQVN). Disulfide bonds link cysteine 63–cysteine 125, cysteine 169–cysteine 217, and cysteine 272–cysteine 320. Asparagine 96 and asparagine 99 each carry an N-linked (GlcNAc...) asparagine glycan. N-linked (GlcNAc...) asparagine glycans are attached at residues asparagine 296, asparagine 351, asparagine 393, and asparagine 467. An intrachain disulfide couples cysteine 363 to cysteine 411. Residues 434–468 (QAGDGMGTGGMGRSSNRNAHNRKQKQMVPPSAPNV) are disordered. Fibronectin type-III domains follow at residues 462-571 (PPSA…LQRG) and 579-674 (VPEL…TQRP). Heparin contacts are provided by arginine 498, lysine 504, and lysine 506. Asparagine 530 carries an N-linked (GlcNAc...) asparagine glycan. Arginine 545 contributes to the heparin binding site. An N-linked (GlcNAc...) asparagine glycan is attached at asparagine 561. The segment covering 666–682 (LKQGRTQRPRSSTTAQP) has biased composition (polar residues). Residues 666–694 (LKQGRTQRPRSSTTAQPTMHTVDTTTPTH) are disordered. Over residues 683-694 (TMHTVDTTTPTH) the composition is skewed to low complexity. N-linked (GlcNAc...) asparagine glycosylation occurs at asparagine 695. Residues 703-723 (LLTGTISGGALLILLVISACL) traverse the membrane as a helical segment. The Cytoplasmic portion of the chain corresponds to 724–897 (CLCKRRHSRG…SSGSLNSVGV (174 aa)). 2 disordered regions span residues 773–793 (AQQQ…DSQD) and 819–849 (MSSS…NLNQ). The span at 774 to 784 (QQQQQQLQQQH) shows a compositional bias: low complexity.

This sequence belongs to the immunoglobulin superfamily. IHOG family. Homodimer. Heterotetramer; 2 iHog chains bind 2 hh chains when facilitated by heparin, heparin is required to promote high-affinity interactions between hh and iHog.

The protein localises to the membrane. Mediates response to the active Hedgehog (Hh) protein signal in embryos, functioning upstream or at the level of patched (ptc). The chain is Interference hedgehog from Drosophila mojavensis (Fruit fly).